An 872-amino-acid chain; its full sequence is MKQLTSAQVRQMWLDFWKSKDHAIEPSANLVPVNDPTLLWINSGVATLKKYFDGSVIPENPRITNAQKAIRTNDIENVGKTARHHTMFEMLGNFSVGDYFRDDAIKWGFELLTSPEWFDLPKDKLYMTYYPDDKDSYNRWIECGVDPSHLIPIEDNFWEIGAGPSGPDTEIFFDRGEDFDPDHIGVRLLAEDIENDRYIEIWNIVLSQFNADPAVPRSEYKELPHKNIDTGAGLERLVAVMQGAKTNFETDLFMPIIREIEKLSGKTYDQDGDNMSFKVIADHIRSLSFAIGDGALPGNEGRGYVLRRLLRRAVMHGRRLGINEPFLYKLVPTVGKIMESYYPEVLEKQDFIEKIVKREEETFARTIDAGSNMLDQLLADLKAADKDTLEGKDIFRLYDTYGFPVELTEELAEDAGFKIDHQGFQAAMKEQQERARANVVKGGSMGMQNETLSNITEKSTFNYEKEALDSSLSVIIADNKRIEAVSEGQVLLVFSETPFYAEMGGQVADHGLIKNDKGDTVARVTDVQKAPNGQALHTVDVLGSLSVGTTYHLEIDHERRNRVMKNHTATHLLHAALHNVIGNHATQAGSLNEVEFLRFDFTHFEAVTPEELRQIEEEVNQQIWKAIPVTTIETDLDTAKEMGAMALFGEKYGKNVRVVSIGDYSVELCGGTHLKNTSEIGIFKIVKEEGIGSGTRRILAVTSKEAFEAYRQEEDILKEIATTLKAPQMNQVANKVASLQDQLHKLQKENAELKEKAAAVAAGDIFKDVKEVNGLRYIASQVEVADAGALRTFADKWKQKDYSDVLVLVASIGKKVNVLVASKSKDIHAGNLIKALAPIVSGRGGGKPDMAMAGGSDASAIKDLIAAVAENL.

Histidine 567, histidine 571, cysteine 669, and histidine 673 together coordinate Zn(2+).

This sequence belongs to the class-II aminoacyl-tRNA synthetase family. Zn(2+) is required as a cofactor.

It is found in the cytoplasm. The catalysed reaction is tRNA(Ala) + L-alanine + ATP = L-alanyl-tRNA(Ala) + AMP + diphosphate. Catalyzes the attachment of alanine to tRNA(Ala) in a two-step reaction: alanine is first activated by ATP to form Ala-AMP and then transferred to the acceptor end of tRNA(Ala). Also edits incorrectly charged Ser-tRNA(Ala) and Gly-tRNA(Ala) via its editing domain. The chain is Alanine--tRNA ligase from Streptococcus mutans serotype c (strain ATCC 700610 / UA159).